The sequence spans 614 residues: Numb-like protein (614 aa).

5 disordered regions span residues 1–68 (MSRS…QWQA), 223–283 (GSFR…PVAA), 371–420 (FASA…LEEV), 448–468 (QQQQ…LQPF), and 539–614 (LGKA…EIEL). The PID domain occupies 74-223 (RKGTCSFPVR…ASRTSFAREG (150 aa)). Phosphoserine is present on residues serine 224 and serine 228. The span at 233–245 (PAEREAGDKKKAE) shows a compositional bias: basic and acidic residues. Residues 246–260 (AAAAPAVAPGPAQPG) show a composition bias toward low complexity. At serine 263 the chain carries Phosphoserine. Threonine 279 carries the post-translational modification Phosphothreonine. Residues 371 to 390 (FASAGAPVPGPPSATTGTSA) show a composition bias toward low complexity. The segment covering 409–418 (TPSEAERWLE) has biased composition (basic and acidic residues). The residue at position 411 (serine 411) is a Phosphoserine. A compositionally biased stretch (pro residues) spans 563-578 (NGAPWPPEPAPAPAPE).

As to quaternary structure, associates with EPS15 and NOTCH1. Interacts (via PTB domain) with MAP3K7IP2 (via C-terminal). Interacts (via C-terminal) with TRAF6 (via TRAF domains).

Its subcellular location is the cytoplasm. Functionally, plays a role in the process of neurogenesis. Required throughout embryonic neurogenesis to maintain neural progenitor cells, also called radial glial cells (RGCs), by allowing their daughter cells to choose progenitor over neuronal cell fate. Not required for the proliferation of neural progenitor cells before the onset of embryonic neurogenesis. Also required postnatally in the subventricular zone (SVZ) neurogenesis by regulating SVZ neuroblasts survival and ependymal wall integrity. Negative regulator of NF-kappa-B signaling pathway. The inhibition of NF-kappa-B activation is mediated at least in part, by preventing MAP3K7IP2 to interact with polyubiquitin chains of TRAF6 and RIPK1 and by stimulating the 'Lys-48'-linked polyubiquitination and degradation of TRAF6 in cortical neurons. The sequence is that of Numb-like protein (Numbl) from Rattus norvegicus (Rat).